The following is a 299-amino-acid chain: Muscleblind-like protein (299 aa).

C3H1-type zinc fingers lie at residues 38–66 (WLQV…HPPP) and 72–100 (QGRV…HPPQ).

The protein belongs to the muscleblind family.

The protein localises to the nucleus. Its function is as follows. Binds to RNA with repeat sequences CUG and CCUG. In Caenorhabditis briggsae, this protein is Muscleblind-like protein.